The following is a 229-amino-acid chain: Small ribosomal subunit protein uS2c (229 aa).

Belongs to the universal ribosomal protein uS2 family.

It is found in the plastid. Its subcellular location is the chloroplast. The polypeptide is Small ribosomal subunit protein uS2c (rps2) (Trieres chinensis (Marine centric diatom)).